The sequence spans 522 residues: Insulinoma-associated protein 1 (522 aa).

Residues 1-12 (MPRGFLVKRSKK) show a composition bias toward basic residues. The interval 1 to 20 (MPRGFLVKRSKKSTPVSYRI) is SNAG domain. Disordered stretches follow at residues 1–112 (MPRG…SREH) and 182–235 (AAEA…KPKA). Residues 2–7 (PRGFLV) form a required and sufficient for interaction with KDM1A region. The tract at residues 43–57 (PPAPGPGPVPGPLQP) is necessary for interaction with CCND1. Over residues 43–61 (PPAPGPGPVPGPLQPPPPT) the composition is skewed to pro residues. Composition is skewed to low complexity over residues 66 to 75 (AALAAALACA) and 212 to 228 (ASAA…AKAP). The C2H2-type 1; atypical zinc-finger motif lies at 277-297 (FICQLCKEEYADPFALAQHKC). Residues 305–327 (YRCPECAKVFSCPANLASHRRWH) form a C2H2-type 2 zinc finger. The tract at residues 325 to 373 (RWHKPRPAPAAARACEPETPARAEAREATGGGGSDRDTPSPGGVSESGS) is disordered. Over residues 339–351 (CEPETPARAEARE) the composition is skewed to basic and acidic residues. 3 C2H2-type zinc fingers span residues 378-400 (YECH…LLAH), 453-476 (HLCP…RLLH), and 481-504 (FPCK…NKCH).

The protein belongs to the INSM1 family. As to quaternary structure, interacts (via the N-terminal region) with CCND1 (via cyclin N-terminal domain); the interaction competes with the binding of CCND1 to CDK4 during cell cycle progression and increases its transcriptional repressor activity. Interacts with HDAC3; the interaction increases its transcriptional repressor activity. Interacts (via the SNAG domain) with HDAC1. Interacts (via the SNAG domain) with HDAC2. Interacts (via the SNAG domain) with KDM1A. Interacts (via the SNAG domain) with RCOR1. Interacts with SORBS1.

It is found in the nucleus. Its function is as follows. Sequence-specific DNA-binding transcriptional regulator that plays a key role in neurogenesis and neuroendocrine cell differentiation during embryonic and/or fetal development. Binds to the consensus sequence 5'-[TG][TC][TC][TT][GA]GGG[CG]A-3' in target promoters. Acts as a transcriptional repressor of NEUROD1 and INS expression via its interaction with cyclin CCND1 in a cell cycle-independent manner. Negatively regulates skeletal muscle-specific gene expression in endocrine cells of the pituitary by inhibiting the Notch signaling pathway. Represses target gene transcription by recruiting chromatin-modifying factors, such as HDAC1, HDAC2, HDAC3, KDM1A and RCOR1 histone deacetylases. Binds to its own promoter, suggesting autoregulation as a self-control feedback mechanism. Competes with histone H3 for the same binding site on the histone demethylase complex formed by KDM1A and RCOR1, and thereby inhibits demethylation of histone H3 at 'Lys-4'. Promotes the generation and expansion of neuronal basal progenitor cells in the developing neocortex. Involved in the differentiation of endocrine cells of the developing anterior pituitary gland, of the pancreas and intestine, and of sympatho-adrenal cells in the peripheral nervous system. Promotes cell cycle signaling arrest and inhibition of cellular proliferation. This chain is Insulinoma-associated protein 1 (INSM1), found in Bos taurus (Bovine).